The sequence spans 844 residues: DNA mismatch repair protein MutS (844 aa).

602 to 609 serves as a coordination point for ATP; sequence GPNMSGKS.

Belongs to the DNA mismatch repair MutS family.

This protein is involved in the repair of mismatches in DNA. It is possible that it carries out the mismatch recognition step. This protein has a weak ATPase activity. In Streptococcus pneumoniae (strain Hungary19A-6), this protein is DNA mismatch repair protein MutS.